Here is an 82-residue protein sequence, read N- to C-terminus: Large ribosomal subunit protein bL28 (82 aa).

The segment at 1 to 25 is disordered; that stretch reads MAKVDQITKKRAMTGNTRSHALNHS.

The protein belongs to the bacterial ribosomal protein bL28 family.

This is Large ribosomal subunit protein bL28 from Malacoplasma penetrans (strain HF-2) (Mycoplasma penetrans).